A 475-amino-acid chain; its full sequence is Lipoprotein lipase (475 aa).

The first 27 residues, 1–27, serve as a signal peptide directing secretion; sequence MESKALLLVALGMWFQSLTATRGGVAA. The interval 32 to 53 is interaction with GPIHBP1; that stretch reads GDFIDIESKFALRTPEDTAEDT. Cysteines 54 and 67 form a disulfide. N-linked (GlcNAc...) asparagine glycosylation is present at asparagine 70. Tyrosine 121 is subject to 3'-nitrotyrosine. Serine 159 (nucleophile) is an active-site residue. Aspartate 183 acts as the Charge relay system in catalysis. 3'-nitrotyrosine is present on tyrosine 191. Residues alanine 194, arginine 197, serine 199, and aspartate 202 each coordinate Ca(2+). Cysteines 243 and 266 form a disulfide. Histidine 268 serves as the catalytic Charge relay system. Intrachain disulfides connect cysteine 291/cysteine 310 and cysteine 302/cysteine 305. The PLAT domain maps to 341–464; sequence FHYQVKIHFS…KGKASVVFVK (124 aa). Tyrosine 343 bears the 3'-nitrotyrosine mark. Asparagine 386 is a glycosylation site (N-linked (GlcNAc...) asparagine). The important for interaction with lipoprotein particles stretch occupies residues 417–421; sequence WSDWW. Residues 430–434 are important for heparin binding; it reads KIRVK. An interaction with GPIHBP1 region spans residues 443-467; that stretch reads IFCSREKVSHLQKGKASVVFVKCHD. A disulfide bridge links cysteine 445 with cysteine 465.

The protein belongs to the AB hydrolase superfamily. Lipase family. In terms of assembly, homodimer. Interacts with GPIHBP1 with 1:1 stoichiometry. Interacts with APOC2; the interaction activates LPL activity in the presence of lipids. Interaction with heparan sulfate proteoglycans is required to protect LPL against loss of activity. Associates with lipoprotein particles in blood plasma. Interacts with LMF1 and SEL1L; interaction with SEL1L is required to prevent aggregation of newly synthesized LPL in the endoplasmic reticulum (ER), and for normal export of LPL from the ER to the extracellular space. Interacts with SORL1; SORL1 acts as a sorting receptor, promoting LPL localization to endosomes and later to lysosomes, leading to degradation of newly synthesized LPL. Tyrosine nitration after lipopolysaccharide (LPS) challenge down-regulates the lipase activity.

The protein localises to the cell membrane. Its subcellular location is the secreted. It localises to the extracellular space. The protein resides in the extracellular matrix. It catalyses the reaction a triacylglycerol + H2O = a diacylglycerol + a fatty acid + H(+). With respect to regulation, the apolipoprotein APOC2 acts as a coactivator of LPL activity. Ca(2+) binding promotes protein stability and formation of the active homodimer. Interaction with GPIHBP1 protects LPL against inactivation by ANGPTL4. Functionally, key enzyme in triglyceride metabolism. Catalyzes the hydrolysis of triglycerides from circulating chylomicrons and very low density lipoproteins (VLDL), and thereby plays an important role in lipid clearance from the blood stream, lipid utilization and storage. Mediates margination of triglyceride-rich lipoprotein particles in capillaries. Recruited to its site of action on the luminal surface of vascular endothelium by binding to GPIHBP1 and cell surface heparan sulfate proteoglycans. The chain is Lipoprotein lipase (LPL) from Neovison vison (American mink).